The chain runs to 290 residues: uncharacterized protein (290 aa).

6 helical membrane passes run 71 to 91 (FWSF…VKNI), 124 to 144 (GILI…LPGM), 155 to 175 (IIIG…YILV), 202 to 222 (FILV…LQLV), 234 to 254 (MFSI…VLTP), and 262 to 282 (ILLS…VLVV).

The protein belongs to the TatC family.

The protein localises to the plastid. The protein resides in the chloroplast membrane. This is an uncharacterized protein from Guillardia theta (Cryptophyte).